Here is a 338-residue protein sequence, read N- to C-terminus: Phenylalanine--tRNA ligase alpha subunit (338 aa).

Glu252 is a binding site for Mg(2+).

This sequence belongs to the class-II aminoacyl-tRNA synthetase family. Phe-tRNA synthetase alpha subunit type 1 subfamily. In terms of assembly, tetramer of two alpha and two beta subunits. The cofactor is Mg(2+).

It is found in the cytoplasm. It carries out the reaction tRNA(Phe) + L-phenylalanine + ATP = L-phenylalanyl-tRNA(Phe) + AMP + diphosphate + H(+). This is Phenylalanine--tRNA ligase alpha subunit from Pseudomonas syringae pv. tomato (strain ATCC BAA-871 / DC3000).